We begin with the raw amino-acid sequence, 291 residues long: Light-independent protochlorophyllide reductase iron-sulfur ATP-binding protein (291 aa).

ATP is bound by residues 10-15 and Lys39; that span reads GIGKST. Ser14 provides a ligand contact to Mg(2+). [4Fe-4S] cluster is bound by residues Cys95 and Cys129. Position 180–181 (180–181) interacts with ATP; that stretch reads NR.

It belongs to the NifH/BchL/ChlL family. Homodimer. Protochlorophyllide reductase is composed of three subunits; ChlL, ChlN and ChlB. Requires [4Fe-4S] cluster as cofactor.

It is found in the plastid. The protein resides in the chloroplast. It carries out the reaction chlorophyllide a + oxidized 2[4Fe-4S]-[ferredoxin] + 2 ADP + 2 phosphate = protochlorophyllide a + reduced 2[4Fe-4S]-[ferredoxin] + 2 ATP + 2 H2O. The protein operates within porphyrin-containing compound metabolism; chlorophyll biosynthesis (light-independent). Component of the dark-operative protochlorophyllide reductase (DPOR) that uses Mg-ATP and reduced ferredoxin to reduce ring D of protochlorophyllide (Pchlide) to form chlorophyllide a (Chlide). This reaction is light-independent. The L component serves as a unique electron donor to the NB-component of the complex, and binds Mg-ATP. The sequence is that of Light-independent protochlorophyllide reductase iron-sulfur ATP-binding protein from Pinus thunbergii (Japanese black pine).